A 1234-amino-acid polypeptide reads, in one-letter code: 1-phosphatidylinositol 4,5-bisphosphate phosphodiesterase beta-3 (1234 aa).

At alanine 2 the chain carries N-acetylalanine. Residues 315–466 form the PI-PLC X-box domain; it reads MDMTQPLSAY…LMGRILVKNK (152 aa). Catalysis depends on residues histidine 330 and histidine 377. Positions 465 to 586 are disordered; the sequence is NKKRHRPSTG…GTASSEVNAT (122 aa). 4 positions are modified to phosphoserine: serine 472, serine 488, serine 493, and serine 535. Low complexity predominate over residues 486 to 513; the sequence is EQSNSALSESSAATEPSSPQLGSPSSDS. The span at 554–566 shows a compositional bias: acidic residues; sequence REDEEEDEEEEET. Over residues 577 to 586 the composition is skewed to polar residues; it reads GTASSEVNAT. The PI-PLC Y-box domain occupies 589 to 705; that stretch reads MSTLVNYVEP…GYLLKPEFMR (117 aa). The C2 domain maps to 706-834; the sequence is RPDKSFDPFT…RNEANQPLCL (129 aa). Positions 886 to 907 are enriched in polar residues; sequence ASTEMCQETPSQQQGSQLSSNP. Positions 886-936 are disordered; that stretch reads ASTEMCQETPSQQQGSQLSSNPVPNPLDDSPRWPPGPTTSPTSTSLSSPGQ. Residues 924–934 show a composition bias toward low complexity; it reads TSPTSTSLSSP. Phosphoserine is present on residues serine 925 and serine 1105. A disordered region spans residues 1196 to 1234; it reads SEGLGDGPLVACASNGHAAGSGGHQSGADSESQEENTQL. An interaction with SHANK2 region spans residues 1231–1234; sequence NTQL.

Interacts with LPAR2. Interacts with SHANK2. The cofactor is Ca(2+). In terms of tissue distribution, expressed in parotid gland, brain, liver, uterus, lung, heart, adrenal gland, and ovary. Not detected in spleen, pancreas, intestine, thymus or kidney.

The protein localises to the cytoplasm. It is found in the membrane. It localises to the nucleus. The enzyme catalyses a 1,2-diacyl-sn-glycero-3-phospho-(1D-myo-inositol-4,5-bisphosphate) + H2O = 1D-myo-inositol 1,4,5-trisphosphate + a 1,2-diacyl-sn-glycerol + H(+). It catalyses the reaction a 1,2-diacyl-sn-glycero-3-phospho-(1D-myo-inositol) + H2O = 1D-myo-inositol 1-phosphate + a 1,2-diacyl-sn-glycerol + H(+). Its activity is regulated as follows. Activated by G(q)/G(11) G alpha proteins in response to ligand-binding to G protein-coupled receptors. In terms of biological role, catalyzes the production of the second messenger molecules diacylglycerol (DAG) and inositol 1,4,5-trisphosphate (IP3). Key transducer of G protein-coupled receptor signaling: activated by G(q)/G(11) G alpha proteins downstream of G protein-coupled receptors activation. In neutrophils, participates in a phospholipase C-activating N-formyl peptide-activated GPCR (G protein-coupled receptor) signaling pathway by promoting RASGRP4 activation by DAG, to promote neutrophil functional responses. The sequence is that of 1-phosphatidylinositol 4,5-bisphosphate phosphodiesterase beta-3 from Rattus norvegicus (Rat).